A 444-amino-acid chain; its full sequence is Chitinase-like protein Idgf5 (444 aa).

The signal sequence occupies residues 1–26 (MMWIQKNPFLGLLLCSFLAFFQSTYA). Residues 29–444 (GKLVCFYDAQ…PILRSIKFKL (416 aa)) enclose the GH18 domain. A disulfide bridge links cysteine 33 with cysteine 60. N-linked (GlcNAc...) asparagine glycans are attached at residues asparagine 289 and asparagine 311. Cysteine 349 and cysteine 429 are joined by a disulfide.

Belongs to the glycosyl hydrolase 18 family. IDGF subfamily. Glycosylated.

Its subcellular location is the secreted. In terms of biological role, probably required to stimulate the proliferation, polarization and motility of imaginal disk cells. May act by stabilizing the binding of insulin-like peptides to its receptor through a simultaneous interaction with both molecules to form a multiprotein signaling complex. In Drosophila melanogaster (Fruit fly), this protein is Chitinase-like protein Idgf5 (Idgf5).